The sequence spans 600 residues: Alpha pinene synthase, chloroplastic (600 aa).

Positions 1-27 (MSSISMHAGPLNISAANNHHPSWDRRV) are disordered. Residues 1–31 (MSSISMHAGPLNISAANNHHPSWDRRVSKPR) constitute a chloroplast transit peptide. Residues Asp-354, Asp-358, Asp-498, and Glu-506 each coordinate Mg(2+). Positions 354 to 358 (DDVYD) match the DDXXD motif motif.

It belongs to the terpene synthase family. Tpsa subfamily. The cofactor is Mg(2+). Mn(2+) is required as a cofactor. Expressed at low levels in leaves.

It is found in the plastid. Its subcellular location is the chloroplast. It carries out the reaction (2E)-geranyl diphosphate = alpha-pinene + diphosphate. The protein operates within secondary metabolite biosynthesis; terpenoid biosynthesis. Its function is as follows. Monoterpene synthase involved in the biosynthesis of volatile compounds widely used in aromatherapy and folk medicine, and present in culinary herbs. Mediates the conversion of (2E)-geranyl diphosphate (GPP) into alpha-pinene and, as minor compounds, into alpha-phellandrene, limonene and alpha-terpinolene. The polypeptide is Alpha pinene synthase, chloroplastic (Lavandula viridis (Green lavender)).